Here is a 502-residue protein sequence, read N- to C-terminus: Mannitol 2-dehydrogenase (502 aa).

NAD(+) is bound at residue 37-48 (IVHVGVGGFHRA).

The protein belongs to the mannitol dehydrogenase family. As to quaternary structure, monomer.

It catalyses the reaction D-mannitol + NAD(+) = D-fructose + NADH + H(+). Catalyzes the NAD(H)-dependent interconversion of D-fructose and D-mannitol in the mannitol metabolic pathway. This is Mannitol 2-dehydrogenase from Aspergillus oryzae (strain ATCC 42149 / RIB 40) (Yellow koji mold).